The primary structure comprises 82 residues: Ubiquinol-cytochrome-c reductase complex assembly factor 3 (82 aa).

The Mitochondrial matrix segment spans residues 1-6 (METVRR). Residues 7 to 29 (IVKGTLLLGFCTGIGGDLWVLVA) form a helical membrane-spanning segment. Topologically, residues 30-82 (PGQERRLEMRMNYPEANPPMLAEAHKRNEMVLKVIEESAKTNENMARRSPWSS) are mitochondrial intermembrane.

The protein belongs to the UQCC3 family. Associates with the ubiquinol-cytochrome c reductase complex (mitochondrial respiratory chain complex III or cytochrome b-c1 complex).

The protein resides in the mitochondrion inner membrane. Its function is as follows. Required for the assembly of the ubiquinol-cytochrome c reductase complex (mitochondrial respiratory chain complex III or cytochrome b-c1 complex), mediating cytochrome b recruitment and probably stabilization within the complex. Thereby, plays an important role in ATP production by mitochondria. Cardiolipin-binding protein, it may also control the cardiolipin composition of mitochondria membranes and their morphology. The polypeptide is Ubiquinol-cytochrome-c reductase complex assembly factor 3 (Xenopus laevis (African clawed frog)).